Reading from the N-terminus, the 908-residue chain is Protein translocase subunit SecA (908 aa).

Residues glutamine 87, 105 to 109, and aspartate 511 contribute to the ATP site; that span reads GEGKT. Basic and acidic residues predominate over residues 559 to 570; that stretch reads ERHESRRIDNQL. Disordered regions lie at residues 559-582 and 841-908; these read ERHE…DPGS and RRRR…GRLE. The span at 847–856 shows a compositional bias: low complexity; sequence LAQQMQRAQA. Positions 862 to 873 are enriched in acidic residues; that stretch reads TEEDSDAEEQAE. The Zn(2+) site is built by cysteine 892, cysteine 894, cysteine 903, and histidine 904. Over residues 898 to 908 the composition is skewed to basic residues; that stretch reads KKYKQCHGRLE.

This sequence belongs to the SecA family. As to quaternary structure, monomer and homodimer. Part of the essential Sec protein translocation apparatus which comprises SecA, SecYEG and auxiliary proteins SecDF-YajC and YidC. Zn(2+) is required as a cofactor.

Its subcellular location is the cell inner membrane. The protein resides in the cytoplasm. It carries out the reaction ATP + H2O + cellular proteinSide 1 = ADP + phosphate + cellular proteinSide 2.. Functionally, part of the Sec protein translocase complex. Interacts with the SecYEG preprotein conducting channel. Has a central role in coupling the hydrolysis of ATP to the transfer of proteins into and across the cell membrane, serving both as a receptor for the preprotein-SecB complex and as an ATP-driven molecular motor driving the stepwise translocation of polypeptide chains across the membrane. The sequence is that of Protein translocase subunit SecA from Hahella chejuensis (strain KCTC 2396).